We begin with the raw amino-acid sequence, 526 residues long: Delayed-rectifier potassium channel regulatory subunit KCNS1 (526 aa).

The Cytoplasmic portion of the chain corresponds to 1-217 (MLMLLVRGTH…LTMENPGYSL (217 aa)). The helical transmembrane segment at 218-239 (PSKLFSCVSISVVLASIAAMCI) threads the bilayer. Residues 240 to 270 (HSLPEYQAREAAAAVAAVAAGRSPEGVRDDP) lie on the Extracellular side of the membrane. A helical transmembrane segment spans residues 271 to 293 (VLRRLEYFCIAWFSFEVSSRLLL). Residues 294–304 (APSTRNFFCHP) are Cytoplasmic-facing. The helical transmembrane segment at 305-322 (LNLIDIVSVLPFYLTLLA) threads the bilayer. Over 323–337 (GVALGDQGGKEFGHL) the chain is Extracellular. A helical; Voltage-sensor transmembrane segment spans residues 338–358 (GKVVQVFRLMRIFRVLKLARH). The Cytoplasmic portion of the chain corresponds to 359–373 (STGLRSLGATLKHSY). A helical membrane pass occupies residues 374-395 (REVGILLLYLAVGVSVFSGVAY). At 396–408 (TAEKEEDVGFNTI) the chain is on the extracellular side. Positions 409-420 (PACWWWGTVSMT) form an intramembrane region, helical. The Selectivity filter signature appears at 421 to 426 (TVGYGD). The stretch at 421 to 428 (TVGYGDVV) is an intramembrane region. Residues 429-435 (PVTVAGK) lie on the Extracellular side of the membrane. Residues 436–464 (LAASGCILGGILVVALPITIIFNKFSHFY) form a helical membrane-spanning segment. At 465–526 (RRQKALEAAV…PSEPPHPQMY (62 aa)) the chain is on the cytoplasmic side. The interval 491–526 (GVSEASLETSRETSQEGRSADLESQAPSEPPHPQMY) is disordered. Over residues 499 to 511 (TSRETSQEGRSAD) the composition is skewed to basic and acidic residues.

The protein belongs to the potassium channel family. S (TC 1.A.1.2) subfamily. Kv9.1/KCNS1 sub-subfamily. As to quaternary structure, heterotetramer with KCNB1. Heterotetramer with KCNB2. Does not form homomultimers.

It is found in the cell membrane. Potassium channel regulatory subunit that modulate the delayed rectifier voltage-gated potassium channel activity of KCNB1 and KCNB2 by altering their kinetics, expression levels, and shifting the half-inactivation potential to more polarized values. While it does not form functional channels on its own, it can form functional heterotetrameric channels with KCNB1 and KCNB2. Each regulatory subunit has unique regulatory properties that can lead to extensive inhibition, significant changes in kinetics, and/or substantial shifts in the voltage dependencies of the inactivation process. The sequence is that of Delayed-rectifier potassium channel regulatory subunit KCNS1 from Pongo abelii (Sumatran orangutan).